We begin with the raw amino-acid sequence, 294 residues long: Polyketide transferase grgF (294 aa).

Catalysis depends on residues Cys-115, Asp-240, and His-269.

The protein belongs to the polyketide transferase af380 family. In terms of assembly, homodimer.

The protein operates within secondary metabolite biosynthesis. Its function is as follows. Polyketide transferase; part of the gene cluster that mediates the biosynthesis of gregatin A, a fungal polyketide featuring an alkylated furanone core. The PKS grgA synthesizes C11 and C4 polyketide chains in the presence and absence of the trans-enoyl reductase grgB, respectively. The polyketide transferase grgF is then responsible for the fusion of the two carbon chains to produce the furanone skeleton of gregatin A. GrgF first undergoes a conformational change to an open form, and the active site Cys-115 is acylated by the C11 chain. After the elimination of the phosphopantetheinyl chain, the second polyketide chain of four carbons long is delivered adjacent to the enzyme-bound C11 chain. The catalytic histidine, His-269, deprotonates a proton from C-2 of the long chain, and the resultant carbanion attacks the C-1 carbonyl of the crotonyl group to perform Claisen condensation, by which the phosphopantetheinyl chain is released. Eventually, hydrolysis of the thioester linkage probably by a His-269-activated water molecule completes the reaction to afford the grgF final product. Next, the cytochrome P450 monooxygenase grgG accepts the unstable grgF final product as substrate and performs the oxidative cyclization to furnish the gregatin scaffold and leads to the formation of desmethylgregatin A. Finally, the O-methyltransferase grgD methylates the carboxyl group of desmethylgregatin A to provide gregatin A. This chain is Polyketide transferase grgF, found in Penicillium sp.